The sequence spans 352 residues: Protein-glutamate methylesterase/protein-glutamine glutaminase 2 (352 aa).

In terms of domain architecture, Response regulatory spans 1-116 (MIVDDSAIVR…KDFIQDAASD (116 aa)). The residue at position 50 (Asp-50) is a 4-aspartylphosphate. The 193-residue stretch at 159 to 351 (SKTTEHVVAI…QEIMRYAHLK (193 aa)) folds into the CheB-type methylesterase domain. Catalysis depends on residues Ser-171, His-197, and Asp-293.

The protein belongs to the CheB family. In terms of processing, phosphorylated by CheA. Phosphorylation of the N-terminal regulatory domain activates the methylesterase activity.

The protein resides in the cytoplasm. It carries out the reaction [protein]-L-glutamate 5-O-methyl ester + H2O = L-glutamyl-[protein] + methanol + H(+). It catalyses the reaction L-glutaminyl-[protein] + H2O = L-glutamyl-[protein] + NH4(+). Involved in chemotaxis. Part of a chemotaxis signal transduction system that modulates chemotaxis in response to various stimuli. Catalyzes the demethylation of specific methylglutamate residues introduced into the chemoreceptors (methyl-accepting chemotaxis proteins or MCP) by CheR. Also mediates the irreversible deamidation of specific glutamine residues to glutamic acid. The chain is Protein-glutamate methylesterase/protein-glutamine glutaminase 2 from Shewanella denitrificans (strain OS217 / ATCC BAA-1090 / DSM 15013).